Consider the following 128-residue polypeptide: Small ribosomal subunit protein bS6 (128 aa).

The protein belongs to the bacterial ribosomal protein bS6 family.

Binds together with bS18 to 16S ribosomal RNA. In Nitratiruptor sp. (strain SB155-2), this protein is Small ribosomal subunit protein bS6.